Reading from the N-terminus, the 369-residue chain is MTSVTLRNVCKSYGDVKISKNVDLDINSGEFVVFVGPSGCGKSTLLRCIAGLEDITSGDLYMGDKRMNDVEPSKRGVGMVFQSYALYPHLNLFDNMSFGLKLAKADKNEIKKRVDHAADILQLGHLLERQPKALSGGQRQRVAIGRTLVSQPDVFLLDEPLSNLDAALRVQMRIEIAKLHKKLGCTMIYVTHDQVEAMTMAEKIVVLDGGYVSQVGAPLELYHYPKNRFVAGFIGSPKMNFVSVFIEEVEKSQVKVQFKNGASFWIPVDGSNVKRGERMSLGIRPEHLVPAENGDAVIDGDILVVEKLGYETQIYLTIEDGDADMIYRVPDTALVKAGERFSVGIPAHRCHLFHNDGKACQRLYKEAGV.

One can recognise an ABC transporter domain in the interval 4–234; the sequence is VTLRNVCKSY…PKNRFVAGFI (231 aa). 36 to 43 is a binding site for ATP; sequence GPSGCGKS.

It belongs to the ABC transporter superfamily. Maltooligosaccharide importer (TC 3.A.1.1.1) family. The complex is composed of two ATP-binding proteins (MalK), two transmembrane proteins (MalG and MalK) and a solute-binding protein (MalE).

It localises to the cell inner membrane. The catalysed reaction is D-maltose(out) + ATP + H2O = D-maltose(in) + ADP + phosphate + H(+). Part of the ABC transporter complex MalEFGK involved in maltose/maltodextrin import. Responsible for energy coupling to the transport system. This chain is Maltose/maltodextrin import ATP-binding protein MalK, found in Aliivibrio fischeri (strain ATCC 700601 / ES114) (Vibrio fischeri).